The sequence spans 327 residues: tRNA dimethylallyltransferase (327 aa).

18–25 (GPTASGKT) contacts ATP. 20-25 (TASGKT) contacts substrate. Interaction with substrate tRNA regions lie at residues 43–46 (DSAL), 167–171 (QRVQR), and 251–256 (RCVGYR).

Belongs to the IPP transferase family. As to quaternary structure, monomer. Mg(2+) is required as a cofactor.

It carries out the reaction adenosine(37) in tRNA + dimethylallyl diphosphate = N(6)-dimethylallyladenosine(37) in tRNA + diphosphate. Catalyzes the transfer of a dimethylallyl group onto the adenine at position 37 in tRNAs that read codons beginning with uridine, leading to the formation of N6-(dimethylallyl)adenosine (i(6)A). The chain is tRNA dimethylallyltransferase from Methylibium petroleiphilum (strain ATCC BAA-1232 / LMG 22953 / PM1).